The following is a 275-amino-acid chain: Large ribosomal subunit protein uL2 (275 aa).

Residues 210–275 (GRNRHRGIRP…DKLIISRKKK (66 aa)) form a disordered region. Over residues 257–275 (FKTRKKKASDKLIISRKKK) the composition is skewed to basic residues.

This sequence belongs to the universal ribosomal protein uL2 family. As to quaternary structure, part of the 50S ribosomal subunit. Forms a bridge to the 30S subunit in the 70S ribosome.

Functionally, one of the primary rRNA binding proteins. Required for association of the 30S and 50S subunits to form the 70S ribosome, for tRNA binding and peptide bond formation. It has been suggested to have peptidyltransferase activity; this is somewhat controversial. Makes several contacts with the 16S rRNA in the 70S ribosome. This Helicobacter hepaticus (strain ATCC 51449 / 3B1) protein is Large ribosomal subunit protein uL2.